Reading from the N-terminus, the 554-residue chain is Guanine nucleotide-binding protein alpha-2 subunit (554 aa).

Disordered regions lie at residues 1–139 (MGLC…NNSN) and 157–183 (VNGN…THSG). A lipid anchor (N-myristoyl glycine) is attached at glycine 2. Residue cysteine 4 is the site of S-palmitoyl cysteine attachment. 2 stretches are compositionally biased toward basic and acidic residues: residues 7 to 17 (KDSRESTHDGG) and 28 to 43 (ANRR…DKKQ). Low complexity predominate over residues 52 to 66 (GSIVNAASNINNSSS). A compositionally biased stretch (polar residues) spans 67–85 (GKTKISTVSEDGTVSNGVG). Residues 91 to 139 (DNANNKNNGNNNNSNNNDNNNNNNNNIGNNINGNNNNDSENIHDSNNSN) are compositionally biased toward low complexity. The G-alpha domain occupies 228 to 554 (NALKVLLLGS…ENSLKDSGVL (327 aa)). The segment at 231–244 (KVLLLGSGESGKST) is G1 motif. GTP is bound by residues glutamate 239, serine 240, glycine 241, lysine 242, serine 243, threonine 244, aspartate 351, isoleucine 376, threonine 382, glycine 405, asparagine 471, lysine 472, aspartate 474, and alanine 526. Serine 243 provides a ligand contact to Mg(2+). Residues 374 to 382 (DVIRTRKKT) are G2 motif. Threonine 382 lines the Mg(2+) pocket. The segment at 398–407 (LHFFDVGGQR) is G3 motif. Residues 467–474 (VLFLNKID) are G4 motif. Residues 524–529 (TQATDT) are G5 motif.

The protein belongs to the G-alpha family. In terms of assembly, g proteins are composed of 3 units; alpha, beta and gamma. The alpha chain contains the guanine nucleotide binding site. Mg(2+) is required as a cofactor.

Functionally, guanine nucleotide-binding proteins (G proteins) are involved as modulators or transducers in various transmembrane signaling systems. This protein may be involved in the determination of the cAMP level according to nutritional conditions, most probably as a regulator of adenylyl cyclase. The chain is Guanine nucleotide-binding protein alpha-2 subunit (GPA2) from Kluyveromyces lactis (strain ATCC 8585 / CBS 2359 / DSM 70799 / NBRC 1267 / NRRL Y-1140 / WM37) (Yeast).